Here is a 144-residue protein sequence, read N- to C-terminus: Small ribosomal subunit protein eS17 (144 aa).

This sequence belongs to the eukaryotic ribosomal protein eS17 family.

This is Small ribosomal subunit protein eS17 (RPS17) from Solanum lycopersicum (Tomato).